The following is a 147-amino-acid chain: Cyanate hydratase (147 aa).

Active-site residues include Arg-88, Glu-91, and Ser-114.

This sequence belongs to the cyanase family.

The catalysed reaction is cyanate + hydrogencarbonate + 3 H(+) = NH4(+) + 2 CO2. Its function is as follows. Catalyzes the reaction of cyanate with bicarbonate to produce ammonia and carbon dioxide. The chain is Cyanate hydratase from Polynucleobacter asymbioticus (strain DSM 18221 / CIP 109841 / QLW-P1DMWA-1) (Polynucleobacter necessarius subsp. asymbioticus).